A 350-amino-acid chain; its full sequence is WD repeat-containing protein DWA2 (350 aa).

WD repeat units lie at residues Lys-39–Arg-79, Ala-118–Glu-158, Gly-166–Ser-205, Ile-206–Gln-246, Gly-250–Thr-290, and Asp-311–Arg-350.

Interacts with ABI5 and DDB1A and DWA1.

The protein resides in the nucleus. It functions in the pathway protein modification; protein ubiquitination. In terms of biological role, component of the CUL4-RBX1-DDB1-DWA1/DWA2 E3 ubiquitin-protein ligase complex that acts as a negative regulator in abscisic acid (ABA) signaling. May function as the substrate recognition module within this complex leading to ABI5 degradation. Functionally redundant with DWA1. This chain is WD repeat-containing protein DWA2 (DWA2), found in Arabidopsis thaliana (Mouse-ear cress).